The primary structure comprises 122 residues: Large ribosomal subunit protein bL17 (122 aa).

The protein belongs to the bacterial ribosomal protein bL17 family. As to quaternary structure, part of the 50S ribosomal subunit. Contacts protein L32.

This Neisseria gonorrhoeae (strain ATCC 700825 / FA 1090) protein is Large ribosomal subunit protein bL17.